Reading from the N-terminus, the 159-residue chain is Ribosomal RNA large subunit methyltransferase H (159 aa).

S-adenosyl-L-methionine contacts are provided by residues L76, G108, and 127–132 (FSRMTF).

Belongs to the RNA methyltransferase RlmH family. In terms of assembly, homodimer.

The protein localises to the cytoplasm. The catalysed reaction is pseudouridine(1915) in 23S rRNA + S-adenosyl-L-methionine = N(3)-methylpseudouridine(1915) in 23S rRNA + S-adenosyl-L-homocysteine + H(+). Its function is as follows. Specifically methylates the pseudouridine at position 1915 (m3Psi1915) in 23S rRNA. In Bacillus licheniformis (strain ATCC 14580 / DSM 13 / JCM 2505 / CCUG 7422 / NBRC 12200 / NCIMB 9375 / NCTC 10341 / NRRL NRS-1264 / Gibson 46), this protein is Ribosomal RNA large subunit methyltransferase H.